We begin with the raw amino-acid sequence, 95 residues long: CRISPR-associated endoribonuclease Cas2 1 (95 aa).

Asp-11 lines the Mg(2+) pocket.

It belongs to the CRISPR-associated endoribonuclease Cas2 protein family. Homodimer, forms a heterotetramer with a Cas1 homodimer. Requires Mg(2+) as cofactor.

In terms of biological role, CRISPR (clustered regularly interspaced short palindromic repeat), is an adaptive immune system that provides protection against mobile genetic elements (viruses, transposable elements and conjugative plasmids). CRISPR clusters contain sequences complementary to antecedent mobile elements and target invading nucleic acids. CRISPR clusters are transcribed and processed into CRISPR RNA (crRNA). Functions as a ssRNA-specific endoribonuclease. Involved in the integration of spacer DNA into the CRISPR cassette. The polypeptide is CRISPR-associated endoribonuclease Cas2 1 (Methanospirillum hungatei JF-1 (strain ATCC 27890 / DSM 864 / NBRC 100397 / JF-1)).